The following is a 528-amino-acid chain: Membrane protein insertase YidC (528 aa).

The next 5 membrane-spanning stretches (helical) occupy residues 13–33 (ILLA…FFIP), 336–356 (WGWA…PLTY), 406–426 (LPIL…LNAI), 446–466 (YFIL…ITPM), and 481–501 (PVIF…YWFV).

It belongs to the OXA1/ALB3/YidC family. Type 1 subfamily. As to quaternary structure, interacts with the Sec translocase complex via SecD. Specifically interacts with transmembrane segments of nascent integral membrane proteins during membrane integration.

Its subcellular location is the cell inner membrane. Functionally, required for the insertion and/or proper folding and/or complex formation of integral membrane proteins into the membrane. Involved in integration of membrane proteins that insert both dependently and independently of the Sec translocase complex, as well as at least some lipoproteins. Aids folding of multispanning membrane proteins. The protein is Membrane protein insertase YidC of Campylobacter jejuni subsp. jejuni serotype O:2 (strain ATCC 700819 / NCTC 11168).